A 122-amino-acid polypeptide reads, in one-letter code: 5'-AMP-activated protein kinase subunit beta-1 (122 aa).

Phosphoserine occurs at positions 5, 61, 66, and 73. The glycogen-binding domain stretch occupies residues Glu-33–Lys-122. Thr-113 bears the Phosphothreonine mark.

This sequence belongs to the 5'-AMP-activated protein kinase beta subunit family. As to quaternary structure, AMPK is a heterotrimer of an alpha catalytic subunit (PRKAA1 or PRKAA2), a beta (PRKAB1 or PRKAB2) and a gamma non-catalytic subunits (PRKAG1, PRKAG2 or PRKAG3). Interacts with FNIP1 and FNIP2. In terms of processing, phosphorylated when associated with the catalytic subunit (PRKAA1 or PRKAA2). Phosphorylated by ULK1; leading to negatively regulate AMPK activity and suggesting the existence of a regulatory feedback loop between ULK1 and AMPK.

Non-catalytic subunit of AMP-activated protein kinase (AMPK), an energy sensor protein kinase that plays a key role in regulating cellular energy metabolism. In response to reduction of intracellular ATP levels, AMPK activates energy-producing pathways and inhibits energy-consuming processes: inhibits protein, carbohydrate and lipid biosynthesis, as well as cell growth and proliferation. AMPK acts via direct phosphorylation of metabolic enzymes, and by longer-term effects via phosphorylation of transcription regulators. Also acts as a regulator of cellular polarity by remodeling the actin cytoskeleton; probably by indirectly activating myosin. Beta non-catalytic subunit acts as a scaffold on which the AMPK complex assembles, via its C-terminus that bridges alpha (PRKAA1 or PRKAA2) and gamma subunits (PRKAG1, PRKAG2 or PRKAG3). The sequence is that of 5'-AMP-activated protein kinase subunit beta-1 (PRKAB1) from Sus scrofa (Pig).